Reading from the N-terminus, the 40-residue chain is Neutral phospholipase A2 homolog cannitoxin beta chain 2 (40 aa).

Heterotrimer of alpha, beta, and gamma chains; non-covalently linked. In terms of tissue distribution, expressed by the venom gland.

It is found in the secreted. Its function is as follows. Heterotrimer: Snake venom phospholipase A2 (PLA2) heterotrimer that acts as a potent presynaptic neurotoxin by blocking synaptic transmission and synaptic vesicle recycling. Enzymatic activity is essential for the neurotoxic effects. May act by binding in a calcium-dependent fashion to neurotonal pentraxin-1 (NPTX1) and neurotonal pentraxin-2 (NPTX2), but not to neuronal pentraxin receptor (NPTXR). Also binds to taipoxin-associated calcium binding protein 49 (RCN2), a protein localized in the lumen of endoplasmic reticulum. Functionally, monomer (beta chain): Snake venom phospholipase A2 homolog that is neither toxic nor enzymatically active. Does not bind calcium. This chain is Neutral phospholipase A2 homolog cannitoxin beta chain 2, found in Oxyuranus scutellatus canni (Papuan taipan).